The chain runs to 434 residues: Protein maelstrom homolog (434 aa).

The segment at residues 4–73 is a DNA-binding region (HMG box); sequence RKASRNAYYF…AQGKDPGPSE (70 aa). A disordered region spans residues 357–385; it reads SHFNSSNEEQRSNTPIGDYPSRAKISGQN.

It belongs to the maelstrom family. Interacts with SMARCB1, SIN3B and DDX4. Interacts with piRNA-associated proteins TDRD1, PIWIL1 and PIWIL2. Interacts with TEX19. As to expression, testis-specific. Expressed in various cancer cell lines, probably due to demethylation of its promoter.

It is found in the cytoplasm. Its subcellular location is the nucleus. Its function is as follows. Plays a central role during spermatogenesis by repressing transposable elements and preventing their mobilization, which is essential for the germline integrity. Acts via the piRNA metabolic process, which mediates the repression of transposable elements during meiosis by forming complexes composed of piRNAs and Piwi proteins and governs the methylation and subsequent repression of transposons. Its association with piP-bodies suggests a participation in the secondary piRNAs metabolic process. Required for the localization of germ-cell factors to the meiotic nuage. The chain is Protein maelstrom homolog (MAEL) from Homo sapiens (Human).